The primary structure comprises 876 residues: Leucine--tRNA ligase (876 aa).

Positions 42–52 match the 'HIGH' region motif; sequence PYPSGKLHMGH. Residues 634 to 638 carry the 'KMSKS' region motif; sequence KMSKS. ATP is bound at residue Lys-637.

It belongs to the class-I aminoacyl-tRNA synthetase family.

It is found in the cytoplasm. The enzyme catalyses tRNA(Leu) + L-leucine + ATP = L-leucyl-tRNA(Leu) + AMP + diphosphate. The chain is Leucine--tRNA ligase from Neisseria meningitidis serogroup C (strain 053442).